The chain runs to 251 residues: Transcriptional regulator CBF1 (251 aa).

The tract at residues 1-169 (MVKSHKRTLE…VERKRRESIN (169 aa)) is disordered. A compositionally biased stretch (basic and acidic residues) spans 7–28 (RTLEKDEEHQEKKKANKISKDD). The span at 40–56 (ASDSAHTDTATAAVAAV) shows a compositional bias: low complexity. Over residues 67-76 (TESSTNQTSA) the composition is skewed to polar residues. A compositionally biased stretch (basic and acidic residues) spans 77-105 (LDKDDKETKDNLNPREETQSSHQEIDIPK). Positions 107-116 (QLTNQQNLAD) are enriched in polar residues. Low complexity predominate over residues 117 to 126 (QHQQYQYHQQ). A compositionally biased stretch (polar residues) spans 127 to 140 (LAQTNFKTEPTNSA). Over residues 144–167 (HGSEEWHRQRRENHKEVERKRRES) the composition is skewed to basic and acidic residues. The bHLH domain maps to 152 to 200 (QRRENHKEVERKRRESINTGIRELARLIPTTDTNKAQILQRAVEYIKRL). Positions 190–223 (LQRAVEYIKRLKENENNNIEKWTLEKLLTEQAVS) form a coiled coil.

It is found in the nucleus. Transcription factor that binds ribosomal protein gene promoters and rDNA locus with TBF1. Necessary for the expression of genes involved in assimilation of inorganic sulfate. Also required for the expression of respiratory genes and glycolytic genes. Does not bind to centromeres and is not necessary for efficient chromosome segregationas as does S.cerevisiae CBF1. The protein is Transcriptional regulator CBF1 (CBF1) of Candida albicans (strain SC5314 / ATCC MYA-2876) (Yeast).